The chain runs to 290 residues: N-acetylmannosamine kinase (290 aa).

Residues 6 to 13 (ALDIGGTK) and 132 to 139 (GVGGGIIL) each bind ATP. The Zn(2+) site is built by histidine 156, cysteine 166, cysteine 168, and cysteine 173.

This sequence belongs to the ROK (NagC/XylR) family. NanK subfamily. Homodimer.

It carries out the reaction an N-acyl-D-mannosamine + ATP = an N-acyl-D-mannosamine 6-phosphate + ADP + H(+). Its pathway is amino-sugar metabolism; N-acetylneuraminate degradation; D-fructose 6-phosphate from N-acetylneuraminate: step 2/5. In terms of biological role, catalyzes the phosphorylation of N-acetylmannosamine (ManNAc) to ManNAc-6-P. This chain is N-acetylmannosamine kinase, found in Yersinia pseudotuberculosis serotype O:1b (strain IP 31758).